The primary structure comprises 266 residues: Uracil-DNA glycosylase (266 aa).

Residues 1-25 (MTRRADPAQATLFDDDEPAGAPTAT) are disordered. The Proton acceptor role is filled by D97.

The protein belongs to the uracil-DNA glycosylase (UDG) superfamily. UNG family.

The protein localises to the cytoplasm. The enzyme catalyses Hydrolyzes single-stranded DNA or mismatched double-stranded DNA and polynucleotides, releasing free uracil.. Its function is as follows. Excises uracil residues from the DNA which can arise as a result of misincorporation of dUMP residues by DNA polymerase or due to deamination of cytosine. This Ralstonia nicotianae (strain ATCC BAA-1114 / GMI1000) (Ralstonia solanacearum) protein is Uracil-DNA glycosylase.